The chain runs to 95 residues: Protein TusB (95 aa).

This sequence belongs to the DsrH/TusB family. In terms of assembly, heterohexamer, formed by a dimer of trimers. The hexameric TusBCD complex contains 2 copies each of TusB, TusC and TusD. The TusBCD complex interacts with TusE.

Its subcellular location is the cytoplasm. Its function is as follows. Part of a sulfur-relay system required for 2-thiolation of 5-methylaminomethyl-2-thiouridine (mnm(5)s(2)U) at tRNA wobble positions. The polypeptide is Protein TusB (Escherichia fergusonii (strain ATCC 35469 / DSM 13698 / CCUG 18766 / IAM 14443 / JCM 21226 / LMG 7866 / NBRC 102419 / NCTC 12128 / CDC 0568-73)).